The following is a 565-amino-acid chain: Proline--tRNA ligase (565 aa).

Belongs to the class-II aminoacyl-tRNA synthetase family. ProS type 1 subfamily. As to quaternary structure, homodimer.

It localises to the cytoplasm. It catalyses the reaction tRNA(Pro) + L-proline + ATP = L-prolyl-tRNA(Pro) + AMP + diphosphate. Its function is as follows. Catalyzes the attachment of proline to tRNA(Pro) in a two-step reaction: proline is first activated by ATP to form Pro-AMP and then transferred to the acceptor end of tRNA(Pro). As ProRS can inadvertently accommodate and process non-cognate amino acids such as alanine and cysteine, to avoid such errors it has two additional distinct editing activities against alanine. One activity is designated as 'pretransfer' editing and involves the tRNA(Pro)-independent hydrolysis of activated Ala-AMP. The other activity is designated 'posttransfer' editing and involves deacylation of mischarged Ala-tRNA(Pro). The misacylated Cys-tRNA(Pro) is not edited by ProRS. The sequence is that of Proline--tRNA ligase from Lactobacillus delbrueckii subsp. bulgaricus (strain ATCC 11842 / DSM 20081 / BCRC 10696 / JCM 1002 / NBRC 13953 / NCIMB 11778 / NCTC 12712 / WDCM 00102 / Lb 14).